Consider the following 192-residue polypeptide: Thymidylate kinase (192 aa).

7 to 14 (GIDCVGKS) provides a ligand contact to ATP.

This sequence belongs to the thymidylate kinase family.

It carries out the reaction dTMP + ATP = dTDP + ADP. Functionally, phosphorylation of dTMP to form dTDP in both de novo and salvage pathways of dTTP synthesis. The sequence is that of Thymidylate kinase from Campylobacter jejuni subsp. doylei (strain ATCC BAA-1458 / RM4099 / 269.97).